The sequence spans 102 residues: MAKMKNPPHPGLMLKVMYLEPLGLNITETAEKLDMPRSALSEIVNAKRAISPEVAVKLEKAFPKHSASFWLRAQAGYALSRVNPHCADKVKPIKTSPLMESV.

The 56-residue stretch at 14 to 69 (LKVMYLEPLGLNITETAEKLDMPRSALSEIVNAKRAISPEVAVKLEKAFPKHSASF) folds into the HTH cro/C1-type domain. The H-T-H motif DNA-binding region spans 25 to 44 (NITETAEKLDMPRSALSEIV).

It belongs to the VapA/VapI family.

The chain is Virulence-associated protein A (vapA) from Dichelobacter nodosus (Bacteroides nodosus).